We begin with the raw amino-acid sequence, 285 residues long: tRNA U34 carboxymethyltransferase (285 aa).

Residues K56, W70, K75, G94, 143-144 (VE), Y163, and R278 contribute to the carboxy-S-adenosyl-L-methionine site.

It belongs to the class I-like SAM-binding methyltransferase superfamily. CmoB family. Homotetramer.

The enzyme catalyses carboxy-S-adenosyl-L-methionine + 5-hydroxyuridine(34) in tRNA = 5-carboxymethoxyuridine(34) in tRNA + S-adenosyl-L-homocysteine + H(+). In terms of biological role, catalyzes carboxymethyl transfer from carboxy-S-adenosyl-L-methionine (Cx-SAM) to 5-hydroxyuridine (ho5U) to form 5-carboxymethoxyuridine (cmo5U) at position 34 in tRNAs. In Campylobacter hominis (strain ATCC BAA-381 / DSM 21671 / CCUG 45161 / LMG 19568 / NCTC 13146 / CH001A), this protein is tRNA U34 carboxymethyltransferase.